We begin with the raw amino-acid sequence, 360 residues long: Vitopine synthase (360 aa).

Belongs to the lysopine/nopaline/octopine/opine/vitopine dehydrogenases family.

The chain is Vitopine synthase (vis) from Allorhizobium ampelinum (strain ATCC BAA-846 / DSM 112012 / S4) (Agrobacterium vitis (strain S4)).